The sequence spans 244 residues: Probable ABC transporter ATP-binding protein in ycf23-apcF intergenic region (244 aa).

The ABC transporter domain maps to 9–241 (LEINNLTVSY…KLSTLFGEHI (233 aa)). 41-48 (GPNGAGKS) serves as a coordination point for ATP.

It belongs to the ABC transporter superfamily.

Its subcellular location is the plastid. The protein localises to the cyanelle. This chain is Probable ABC transporter ATP-binding protein in ycf23-apcF intergenic region, found in Cyanophora paradoxa.